The chain runs to 546 residues: Sodium/hydrogen exchanger 2 (546 aa).

Residues 1-21 (MTMFASLTSKMLSVSTSDHAS) lie on the Cytoplasmic side of the membrane. A helical transmembrane segment spans residues 22-42 (VVSLNLFVALLCACIVIGHLL). The Vacuolar segment spans residues 43-47 (EENRW). A helical transmembrane segment spans residues 48 to 68 (MNESITALLIGLGTGVVILLI). Topologically, residues 69-75 (SRGKNSH) are cytoplasmic. Positions 76–96 (LLVFSEDLFFIYLLPPIIFNA) form an intramembrane region, helical. Over 97–111 (GFQVKKKQFFRNFVT) the chain is Cytoplasmic. The helical transmembrane segment at 112 to 132 (IMAFGAIGTVVSCTIISLGAI) threads the bilayer. The Vacuolar segment spans residues 133–148 (QFFKKLDIGTFDLGDF). 2 consecutive intramembrane regions (helical) follow at residues 149–168 (LAIGAIFAATDSVCTLQVLN) and 174–194 (LLYSLVFGEGVVNDATSVVLF). Topologically, residues 195-218 (NAIQSFDLTHLNHEAAFQFLGNFF) are vacuolar. A helical membrane pass occupies residues 219–239 (YLFLLSTGLGVATGLISAYVI). Residues 240–264 (KKLYFGRHSTDREVALMMLMAYLSY) lie on the Cytoplasmic side of the membrane. A helical transmembrane segment spans residues 265–285 (MLAELFALSGILTVFFCGIVM). Over 286–304 (SHYTWHNVTESSRITTKHA) the chain is Vacuolar. An N-linked (GlcNAc...) asparagine glycan is attached at Asn-292. Residues 305 to 325 (FATLSFLAETFIFLYVGMDAL) form a helical membrane-spanning segment. Residues 326-344 (DIEKWRFVSDSPGTSVAVS) lie on the Cytoplasmic side of the membrane. A helical membrane pass occupies residues 345-365 (SILMGLVMLGRAAFVFPLSFL). Topologically, residues 366 to 381 (SNLAKKHQSEKISIKQ) are vacuolar. A helical membrane pass occupies residues 382–402 (QVVIWWAGLMRGAVSMALAYN). Over 403–415 (KFTRSGHTELRGN) the chain is Cytoplasmic. The chain crosses the membrane as a helical span at residues 416–436 (AIMITSTITVCLFSTMVFGML). Over 437-546 (TKPLIRYLMP…ERSSHDLSKP (110 aa)) the chain is Vacuolar.

The protein belongs to the monovalent cation:proton antiporter 1 (CPA1) transporter (TC 2.A.36) family. Expressed in roots and shoots.

It is found in the vacuole membrane. It carries out the reaction Na(+)(in) + H(+)(out) = Na(+)(out) + H(+)(in). The enzyme catalyses K(+)(in) + H(+)(out) = K(+)(out) + H(+)(in). Its function is as follows. Acts in low affinity electroneutral exchange of protons for cations such as Na(+) or K(+) across membranes. May also exchange Li(+) and Cs(+) with a lower affinity. Involved in vacuolar ion compartmentalization necessary for cell volume regulation and cytoplasmic Na(+) detoxification. The chain is Sodium/hydrogen exchanger 2 (NHX2) from Arabidopsis thaliana (Mouse-ear cress).